We begin with the raw amino-acid sequence, 312 residues long: Olfactory receptor 2T8 (312 aa).

The Extracellular portion of the chain corresponds to 1 to 26 (MENGSYTSYFILLGLFNHTRAHQVLF). N-linked (GlcNAc...) asparagine glycosylation is found at Asn3 and Asn17. A helical transmembrane segment spans residues 27-47 (MMVLSIVLTSLFGNSLMILLI). Topologically, residues 48–55 (HWDHRLHT) are cytoplasmic. A helical transmembrane segment spans residues 56–76 (PMYFLLSQLSLMDVMLVSTTV). At 77 to 96 (PKMAADYLTGSKAISRAGCG) the chain is on the extracellular side. A disulfide bridge connects residues Cys95 and Cys177. A helical transmembrane segment spans residues 97–117 (AQIFFLPTLGGGECFLLAAMA). The Cytoplasmic portion of the chain corresponds to 118-143 (YDRYAAVCHPLRYPTLMSWQLCLRMN). A helical membrane pass occupies residues 144–164 (LSCWLLGAADGLLQAVATLSF). The Extracellular segment spans residues 165–201 (PYCGAHEIDHFFCETPVLVRLACADTSVFENAMYICC). Residues 202-222 (VLMLLVPFSLILSSYGLILAA) traverse the membrane as a helical segment. Topologically, residues 223–234 (VLHMRSTEARKK) are cytoplasmic. The helical transmembrane segment at 235–255 (AFATCSSHVAVVGLFYGAAIF) threads the bilayer. Topologically, residues 256-269 (TYMRPKSHRSTNHD) are extracellular. A helical membrane pass occupies residues 270–290 (KVVSAFYTMFTPLLNPLIYSV). Residues 291–312 (KNSEVKGALTRCMGRCVALSRE) are Cytoplasmic-facing.

It belongs to the G-protein coupled receptor 1 family.

It is found in the cell membrane. Its function is as follows. Odorant receptor. The chain is Olfactory receptor 2T8 (OR2T8) from Homo sapiens (Human).